We begin with the raw amino-acid sequence, 254 residues long: UPF0246 protein CPF_2407 (254 aa).

It belongs to the UPF0246 family.

This Clostridium perfringens (strain ATCC 13124 / DSM 756 / JCM 1290 / NCIMB 6125 / NCTC 8237 / Type A) protein is UPF0246 protein CPF_2407.